The primary structure comprises 331 residues: Ornithine carbamoyltransferase (331 aa).

Carbamoyl phosphate-binding positions include 55 to 58, Gln82, Arg106, and 133 to 136; these read STRT and HPTQ. L-ornithine contacts are provided by residues Asn166, Asp230, and 234–235; that span reads SM. Residues 272-273 and Arg317 each bind carbamoyl phosphate; that span reads CL.

Belongs to the aspartate/ornithine carbamoyltransferase superfamily. OTCase family.

It is found in the cytoplasm. The enzyme catalyses carbamoyl phosphate + L-ornithine = L-citrulline + phosphate + H(+). It participates in amino-acid biosynthesis; L-arginine biosynthesis; L-arginine from L-ornithine and carbamoyl phosphate: step 1/3. Functionally, reversibly catalyzes the transfer of the carbamoyl group from carbamoyl phosphate (CP) to the N(epsilon) atom of ornithine (ORN) to produce L-citrulline. In Neisseria gonorrhoeae (strain ATCC 700825 / FA 1090), this protein is Ornithine carbamoyltransferase.